A 468-amino-acid polypeptide reads, in one-letter code: Cyclin-T1.1 (468 aa).

Positions 336–354 (KERGVEEERRKRERDRMAG) are enriched in basic and acidic residues. The interval 336–468 (KERGVEEERR…DMDLEDGELE (133 aa)) is disordered. Positions 387-402 (APPPIPPQLNFPPPPI) are enriched in pro residues. Acidic residues predominate over residues 458–468 (SDMDLEDGELE).

It belongs to the cyclin family. Cyclin C subfamily.

Functionally, regulatory subunit of the cyclin-dependent kinase pair (CDK9/cyclin T) complex, also called positive transcription elongation factor B (P-TEFb), which is proposed to facilitate the transition from abortive to production elongation by phosphorylating the CTD (carboxy-terminal domain) of the large subunit of RNA polymerase II (RNAP II). In Caenorhabditis elegans, this protein is Cyclin-T1.1.